We begin with the raw amino-acid sequence, 150 residues long: PTS system galactitol-specific EIIA component (150 aa).

The region spanning 1-144 (MTNLFVRSGI…TQLKEYFTKY (144 aa)) is the PTS EIIA type-2 domain. The Tele-phosphohistidine intermediate role is filled by H62. H62 carries the post-translational modification Phosphohistidine; by HPr.

In terms of assembly, forms a complex with one each of subunit of GatA, GatB and 2 subunits of GatC.

The protein localises to the cytoplasm. Its function is as follows. The phosphoenolpyruvate-dependent sugar phosphotransferase system (sugar PTS), a major carbohydrate active transport system, catalyzes the phosphorylation of incoming sugar substrates concomitantly with their translocation across the cell membrane. The enzyme II complex composed of GatA, GatB and GatC is involved in galactitol transport. The polypeptide is PTS system galactitol-specific EIIA component (gatA) (Escherichia coli O157:H7).